Reading from the N-terminus, the 907-residue chain is Whirlin (907 aa).

A PDZ 1 domain is found at 140–223 (LVSLRRAKAH…LVLSVYSAGR (84 aa)). The interval 243–264 (SISPPSGLPQPHGGALRQQEGD) is disordered. One can recognise a PDZ 2 domain in the interval 279–361 (KVNLVLGDGR…LILTVKDVGR (83 aa)). 4 disordered regions span residues 502 to 540 (SMKA…TVSS), 565 to 663 (SVDD…SSKR), 684 to 717 (QSPP…QTGT), and 742 to 815 (PQTR…PTST). Positions 521-540 (SYSDTGSSTGSHGTSTTVSS) are enriched in low complexity. The segment covering 609 to 626 (PPSSMPSCSGTVFSAPQN) has biased composition (polar residues). Low complexity predominate over residues 628 to 642 (SPPAGTAPTPGTSSA). Position 685 is a phosphoserine (serine 685). A compositionally biased stretch (polar residues) spans 743-762 (QTRTASTLSQLSDSGQTLSE). A compositionally biased stretch (basic and acidic residues) spans 789–800 (SSKELPRNERPT). The 84-residue stretch at 816 to 899 (LVRVKKSAAT…TKDRDYIDFL (84 aa)) folds into the PDZ 3 domain.

Forms homooligomers. Interacts (via C-terminal PDZ domain) with MYO15A; this interaction is necessary for localization of WHRN to stereocilia tips. Interacts (via C-terminal PDZ domain) with MPP1/p55. Interacts with LRRC4C/NGL1. Interacts with MYO7A. Interacts with RPGR. Interacts with EPS8. Interacts with CASK. Interacts with CIB2. Component of USH2 complex, composed of ADGRV1, PDZD7, USH2A and WHRN. Interacts (via PDZ domains) with PDZD7; the interaction is direct. Interacts (via N-terminal PDZ domain) with USH2A (via cytoplasmic region). Interacts with ADGRV1/MASS1 (via cytoplasmic region).

The protein resides in the cytoplasm. The protein localises to the cell projection. It is found in the stereocilium. Its subcellular location is the growth cone. It localises to the photoreceptor inner segment. The protein resides in the synapse. Its function is as follows. Involved in hearing and vision as member of the USH2 complex. Necessary for elongation and maintenance of inner and outer hair cell stereocilia in the organ of Corti in the inner ear. Involved in the maintenance of the hair bundle ankle region, which connects stereocilia in cochlear hair cells of the inner ear. In retina photoreceptors, required for the maintenance of periciliary membrane complex that seems to play a role in regulating intracellular protein transport. The sequence is that of Whirlin from Homo sapiens (Human).